Reading from the N-terminus, the 104-residue chain is Photosystem II reaction center Psb28 protein (104 aa).

This sequence belongs to the Psb28 family. Part of the photosystem II complex.

It is found in the cellular thylakoid membrane. In Synechococcus sp. (strain JA-2-3B'a(2-13)) (Cyanobacteria bacterium Yellowstone B-Prime), this protein is Photosystem II reaction center Psb28 protein.